A 588-amino-acid chain; its full sequence is Histone deacetylase 9 (588 aa).

The residue at position 22 (S22) is a Phosphoserine. Residues 23–27 (PLDLR) form an interaction with CTBP1 region. Residues 110–147 (RQEQEVERHRREQQLPPLRGKDRGRERAVASTEVKQKL) show a composition bias toward basic and acidic residues. Disordered regions lie at residues 110–170 (RQEQ…HSVG), 183–242 (TSLD…SSPL), and 264–301 (SSVS…PHPE). The interval 136-154 (RAVASTEVKQKLQEFLLSK) is interaction with MEF2. 2 stretches are compositionally biased toward polar residues: residues 154–166 (KSAT…NGKN) and 185–199 (LDQS…SPSY). The interval 175-343 (LWYTAAHHTS…LPAVPSPLNA (169 aa)) is interaction with MAPK10. Positions 208 to 219 (DSKDDFPLRKTA) are enriched in basic and acidic residues. The interaction with ETV6 stretch occupies residues 218 to 261 (TASEPNLKVRSRLKQKVAERRSSPLLRRKDGNLVTSFKKRVFEV). S220 carries the post-translational modification Phosphoserine. Residues 233 to 242 (KVAERRSSPL) are compositionally biased toward basic and acidic residues. Residue S240 is modified to Phosphoserine; by DYRK1B. Residues 264-284 (SSVSSSSPGSGPSSPNNGPAG) show a composition bias toward low complexity. Position 450 is a phosphoserine (S450). The interval 493–533 (QLKQPGSHLEEAEEELQGDQSMEDRAASKDNSARSDSSACV) is disordered. Residues 514 to 525 (MEDRAASKDNSA) are compositionally biased toward basic and acidic residues. A Phosphoserine modification is found at S552.

This sequence belongs to the histone deacetylase family. HD type 2 subfamily. Homodimer. Interacts with ETV6. Interacts with MEF2, HDAC1, HDAC3, HDAC4, HDAC5, CTBP1 and MAPK10. The phosphorylated form interacts with 14-3-3. Interacts with FOXP3 in the absence of T-cell stimulation. In terms of processing, sumoylated. Phosphorylated on Ser-220 and Ser-450; which promotes 14-3-3-binding, impairs interaction with MEF2, and antagonizes antimyogenic activity. Phosphorylated on Ser-240 by DYRK1B; which impairs nuclear accumulation. Phosphorylated by the PKC kinases PKN1 and PKN2, impairing nuclear import. Expressed at high levels in heart, brain and spleen. Expressed in skeletal muscle.

The protein resides in the nucleus. It catalyses the reaction N(6)-acetyl-L-lysyl-[histone] + H2O = L-lysyl-[histone] + acetate. Its function is as follows. Devoided of intrinsic deacetylase activity, promotes the deacetylation of lysine residues on the N-terminal part of the core histones (H2A, H2B, H3 and H4) by recruiting HDAC1 and HDAC3. Histone deacetylation gives a tag for epigenetic repression and plays an important role in transcriptional regulation, cell cycle progression and developmental events. Represses MEF2-dependent transcription, inhibits skeletal myogenesis and may be involved in heart development. Protects neurons from apoptosis, both by inhibiting JUN phosphorylation by MAPK10 and by repressing JUN transcription via HDAC1 recruitment to JUN promoter. This Mus musculus (Mouse) protein is Histone deacetylase 9 (Hdac9).